Reading from the N-terminus, the 168-residue chain is Phosphopantetheine adenylyltransferase (168 aa).

Substrate is bound at residue serine 9. Residues serine 9 to phenylalanine 10 and histidine 17 each bind ATP. The substrate site is built by lysine 41, leucine 73, and arginine 87. Residues glycine 88–arginine 90, glutamate 98, and tryptophan 123–serine 129 each bind ATP.

The protein belongs to the bacterial CoaD family. In terms of assembly, homohexamer. It depends on Mg(2+) as a cofactor.

It localises to the cytoplasm. The catalysed reaction is (R)-4'-phosphopantetheine + ATP + H(+) = 3'-dephospho-CoA + diphosphate. It participates in cofactor biosynthesis; coenzyme A biosynthesis; CoA from (R)-pantothenate: step 4/5. Reversibly transfers an adenylyl group from ATP to 4'-phosphopantetheine, yielding dephospho-CoA (dPCoA) and pyrophosphate. This is Phosphopantetheine adenylyltransferase from Desulfosudis oleivorans (strain DSM 6200 / JCM 39069 / Hxd3) (Desulfococcus oleovorans).